The primary structure comprises 337 residues: MTETLRVAVIGAGRMGADHIQRLSKRIHGAEVAAVVDVDLARAQAAVEGIPGAVALADADEALNNGDVNAVLIATPGFLHEDILLKALARDIPILCEKPLTPDAESAWKIVQAEEKLGHKRIQVGFMRRFDAEYAALGQVIRDHELGELLMLHHQHRNPTTPPGFTNEMLINDSVVHEFDAIRFFTGEEITSVQVRLGKATKNAPAGQHDPQHVLVETESGVLADVEIFVNAKFGYEVATQASFEDGIVSIGGDKGPYTRAAGRWGGNVTPGFEERFGAAYDVEIQSWVDAALRGEIGGPTAWDGYATAACCEAGVEAQKNGEKVAVKLNARPALYS.

The protein belongs to the Gfo/Idh/MocA family. As to quaternary structure, homotetramer.

It catalyses the reaction myo-inositol + NAD(+) = scyllo-inosose + NADH + H(+). Its function is as follows. Involved in the oxidation of myo-inositol (MI) to 2-keto-myo-inositol (2KMI or 2-inosose). This is Inositol 2-dehydrogenase from Arthrobacter sp. (strain FB24).